The following is a 280-amino-acid chain: Lacto-N-neotetraose biosynthesis glycosyltransferase LgtE (280 aa).

The protein belongs to the glycosyltransferase 25 family.

It participates in glycan metabolism; lacto-N-neotetraose biosynthesis. Its pathway is bacterial outer membrane biogenesis; lipooligosaccharide biosynthesis. Functionally, adds the first galactose to the lacto-N-tetraose chain in lipooligosaccharide (LOS). The polypeptide is Lacto-N-neotetraose biosynthesis glycosyltransferase LgtE (lgtE) (Neisseria meningitidis serogroup B (strain ATCC BAA-335 / MC58)).